Consider the following 279-residue polypeptide: DegV domain-containing protein spr1019 (279 aa).

Residues 4–277 (IKIVTDSSVT…ENAWAILIRY (274 aa)) enclose the DegV domain. Thr62 and Ser94 together coordinate hexadecanoate.

Its function is as follows. May bind long-chain fatty acids, such as palmitate, and may play a role in lipid transport or fatty acid metabolism. The sequence is that of DegV domain-containing protein spr1019 from Streptococcus pneumoniae (strain ATCC BAA-255 / R6).